The sequence spans 143 residues: Transcriptional regulator SlyA (143 aa).

The 134-residue stretch at 2–135 (ESTLGSDLSR…LTNLVERLEQ (134 aa)) folds into the HTH marR-type domain. The H-T-H motif DNA-binding region spans 49–72 (QIQLAKAIGIEQPSLVRTLDQLED).

This sequence belongs to the SlyA family. As to quaternary structure, homodimer.

Its function is as follows. Transcription regulator that can specifically activate or repress expression of target genes. This chain is Transcriptional regulator SlyA, found in Edwardsiella tarda.